The following is a 312-amino-acid chain: sn-1-specific diacylglycerol lipase ABHD11 (312 aa).

Residues 1-14 (MITFKSFHCSRGWH) constitute a mitochondrion transit peptide. Residues 62–297 (PPLVLLHGLF…GAGHWVHADK (236 aa)) enclose the AB hydrolase-1 domain. Residues Ser-136, Glu-232, and His-291 each act as charge relay system in the active site.

It belongs to the AB hydrolase superfamily. Post-translationally, phosphorylated.

The protein resides in the mitochondrion. It is found in the mitochondrion matrix. The catalysed reaction is 1-octadecanoyl-2-(5Z,8Z,11Z,14Z-eicosatetraenoyl)-sn-glycerol + H2O = 2-(5Z,8Z,11Z,14Z-eicosatetraenoyl)-glycerol + octadecanoate + H(+). The enzyme catalyses a 1,2-diacyl-sn-glycerol + H2O = a 2-acylglycerol + a fatty acid + H(+). It carries out the reaction a 1,3-diacyl-sn-glycerol + H2O = a 1-acyl-sn-glycerol + a fatty acid + H(+). It catalyses the reaction 1-octadecanoyl-2-(9Z-octadecenoyl)-sn-glycerol + H2O = 2-(9Z-octadecenoyl)-glycerol + octadecanoate + H(+). The catalysed reaction is 1-octadecanoyl-2-(4Z,7Z,10Z,13Z,16Z,19Z-docosahexaenoyl)-sn-glycerol + H2O = 2-(4Z,7Z,10Z,13Z,16Z,19Z-docosahexaenoyl)-glycerol + octadecanoate + H(+). The enzyme catalyses 1,2-didecanoylglycerol + H2O = decanoylglycerol + decanoate + H(+). Its function is as follows. Catalyzes the hydrolysis of diacylglycerol in vitro and may function as a key regulator in lipid metabolism, namely by regulating the intracellular levels of diacylglycerol. 1,2-diacyl-sn-glycerols are the preferred substrate over 1,3-diacyl-sn-glycerols. The enzyme hydrolyzes stearate in preference to palmitate from the sn-1 position of 1,2-diacyl-sn-glycerols. This chain is sn-1-specific diacylglycerol lipase ABHD11, found in Xenopus laevis (African clawed frog).